A 459-amino-acid polypeptide reads, in one-letter code: tRNA modification GTPase MnmE (459 aa).

Positions 23, 88, and 127 each coordinate (6S)-5-formyl-5,6,7,8-tetrahydrofolate. One can recognise a TrmE-type G domain in the interval 223 to 381 (GLNTVIIGKP…LKDTIENMFA (159 aa)). Residue N233 participates in K(+) binding. Residues 233 to 238 (NVGKSS), 252 to 258 (TDIPGTT), and 277 to 280 (DTAG) contribute to the GTP site. S237 contributes to the Mg(2+) binding site. T252, I254, and T257 together coordinate K(+). A Mg(2+)-binding site is contributed by T258. K459 provides a ligand contact to (6S)-5-formyl-5,6,7,8-tetrahydrofolate.

It belongs to the TRAFAC class TrmE-Era-EngA-EngB-Septin-like GTPase superfamily. TrmE GTPase family. As to quaternary structure, homodimer. Heterotetramer of two MnmE and two MnmG subunits. K(+) is required as a cofactor.

The protein resides in the cytoplasm. Its function is as follows. Exhibits a very high intrinsic GTPase hydrolysis rate. Involved in the addition of a carboxymethylaminomethyl (cmnm) group at the wobble position (U34) of certain tRNAs, forming tRNA-cmnm(5)s(2)U34. This Clostridium acetobutylicum (strain ATCC 824 / DSM 792 / JCM 1419 / IAM 19013 / LMG 5710 / NBRC 13948 / NRRL B-527 / VKM B-1787 / 2291 / W) protein is tRNA modification GTPase MnmE.